We begin with the raw amino-acid sequence, 172 residues long: Adenine phosphoribosyltransferase (172 aa).

The protein belongs to the purine/pyrimidine phosphoribosyltransferase family. Homodimer.

The protein localises to the cytoplasm. It catalyses the reaction AMP + diphosphate = 5-phospho-alpha-D-ribose 1-diphosphate + adenine. It functions in the pathway purine metabolism; AMP biosynthesis via salvage pathway; AMP from adenine: step 1/1. Its function is as follows. Catalyzes a salvage reaction resulting in the formation of AMP, that is energically less costly than de novo synthesis. This chain is Adenine phosphoribosyltransferase, found in Pelobacter propionicus (strain DSM 2379 / NBRC 103807 / OttBd1).